We begin with the raw amino-acid sequence, 174 residues long: Probable adenylyl-sulfate kinase (174 aa).

10–17 is an ATP binding site; the sequence is GPSGAGKT. Ser-84 functions as the Phosphoserine intermediate in the catalytic mechanism.

The protein belongs to the APS kinase family.

The enzyme catalyses adenosine 5'-phosphosulfate + ATP = 3'-phosphoadenylyl sulfate + ADP + H(+). It participates in sulfur metabolism; hydrogen sulfide biosynthesis; sulfite from sulfate: step 2/3. Catalyzes the synthesis of activated sulfate. This chain is Probable adenylyl-sulfate kinase (cysC), found in Pyrococcus abyssi (strain GE5 / Orsay).